The sequence spans 314 residues: Protoheme IX farnesyltransferase (314 aa).

Transmembrane regions (helical) follow at residues 58–78, 107–127, 130–150, 173–193, 227–247, 248–268, and 294–314; these read LWLV…ASVF, AALV…YVWV, LSAA…TMLL, WTAV…VVFF, VGRQ…LLWP, VAGT…VFLL, and SSNL…LLAG.

It belongs to the UbiA prenyltransferase family. Protoheme IX farnesyltransferase subfamily.

The protein resides in the cell membrane. The catalysed reaction is heme b + (2E,6E)-farnesyl diphosphate + H2O = Fe(II)-heme o + diphosphate. The protein operates within porphyrin-containing compound metabolism; heme O biosynthesis; heme O from protoheme: step 1/1. Converts heme B (protoheme IX) to heme O by substitution of the vinyl group on carbon 2 of heme B porphyrin ring with a hydroxyethyl farnesyl side group. The polypeptide is Protoheme IX farnesyltransferase (Nocardioides sp. (strain ATCC BAA-499 / JS614)).